Reading from the N-terminus, the 737-residue chain is Ribosome-releasing factor 2, mitochondrial (737 aa).

A mitochondrion-targeting transit peptide spans 1-36 (MLCNRLHKAAFAARLRPRLPATVASCRQVHNSDGTI). One can recognise a tr-type G domain in the interval 39–318 (KRIRNIGILA…SVLNFLPAPS (280 aa)). Residues 48–55 (AHIDAGKT), 112–116 (DTPGH), and 166–169 (NKMD) contribute to the GTP site.

It belongs to the TRAFAC class translation factor GTPase superfamily. Classic translation factor GTPase family. EF-G/EF-2 subfamily.

It is found in the mitochondrion. In terms of biological role, mitochondrial GTPase that mediates the disassembly of ribosomes from messenger RNA at the termination of mitochondrial protein biosynthesis. Not involved in the GTP-dependent ribosomal translocation step during translation elongation. This is Ribosome-releasing factor 2, mitochondrial from Anopheles gambiae (African malaria mosquito).